The chain runs to 343 residues: Anthranilate phosphoribosyltransferase (343 aa).

5-phospho-alpha-D-ribose 1-diphosphate contacts are provided by residues Gly84, 87 to 88, Thr92, 94 to 97, 112 to 120, and Ser124; these read GD, NIST, and KHGNRGVSS. Gly84 serves as a coordination point for anthranilate. Residue Ser96 participates in Mg(2+) binding. Residue Asn115 participates in anthranilate binding. Arg170 is a binding site for anthranilate. Mg(2+)-binding residues include Asp229 and Glu230.

This sequence belongs to the anthranilate phosphoribosyltransferase family. In terms of assembly, homodimer. The cofactor is Mg(2+).

It carries out the reaction N-(5-phospho-beta-D-ribosyl)anthranilate + diphosphate = 5-phospho-alpha-D-ribose 1-diphosphate + anthranilate. The protein operates within amino-acid biosynthesis; L-tryptophan biosynthesis; L-tryptophan from chorismate: step 2/5. In terms of biological role, catalyzes the transfer of the phosphoribosyl group of 5-phosphorylribose-1-pyrophosphate (PRPP) to anthranilate to yield N-(5'-phosphoribosyl)-anthranilate (PRA). This is Anthranilate phosphoribosyltransferase from Burkholderia orbicola (strain MC0-3).